The primary structure comprises 152 residues: Nascent polypeptide-associated complex subunit beta (152 aa).

2 disordered regions span residues 19–39 (IGKG…AGDD) and 125–152 (NMQK…SKVE). Positions 23–32 (TPRRKVKRAP) are enriched in basic residues. Positions 36 to 101 (AGDDKKLQAT…GEDKELTELV (66 aa)) constitute an NAC-A/B domain.

The protein belongs to the NAC-beta family. Part of the nascent polypeptide-associated complex (NAC), consisting of npc-1/egd2 and npc-2/egd1. NAC associates with ribosomes via npc-2/egd1.

Its subcellular location is the cytoplasm. The protein localises to the nucleus. Component of the nascent polypeptide-associated complex (NAC), a dynamic component of the ribosomal exit tunnel, protecting the emerging polypeptides from interaction with other cytoplasmic proteins to ensure appropriate nascent protein targeting. The NAC complex also promotes mitochondrial protein import by enhancing productive ribosome interactions with the outer mitochondrial membrane and blocks the inappropriate interaction of ribosomes translating non-secretory nascent polypeptides with translocation sites in the membrane of the endoplasmic reticulum. Npc-2/egd1 may act as a transcription factor that exert a negative effect on the expression of several genes that are transcribed by RNA polymerase II. The protein is Nascent polypeptide-associated complex subunit beta (npc-2) of Neurospora crassa (strain ATCC 24698 / 74-OR23-1A / CBS 708.71 / DSM 1257 / FGSC 987).